We begin with the raw amino-acid sequence, 545 residues long: Chaperonin GroEL 2 (545 aa).

Residues 30–33 (TLGP), Lys-51, 87–91 (DGTTT), Gly-415, and Asp-494 each bind ATP. The interval 526-545 (EKGAGMPGMPPGGGYPGMGM) is disordered. Residues 536 to 545 (PGGGYPGMGM) show a composition bias toward gly residues.

This sequence belongs to the chaperonin (HSP60) family. In terms of assembly, forms a cylinder of 14 subunits composed of two heptameric rings stacked back-to-back. Interacts with the co-chaperonin GroES.

Its subcellular location is the cytoplasm. The enzyme catalyses ATP + H2O + a folded polypeptide = ADP + phosphate + an unfolded polypeptide.. Together with its co-chaperonin GroES, plays an essential role in assisting protein folding. The GroEL-GroES system forms a nano-cage that allows encapsulation of the non-native substrate proteins and provides a physical environment optimized to promote and accelerate protein folding. This is Chaperonin GroEL 2 from Syntrophus aciditrophicus (strain SB).